We begin with the raw amino-acid sequence, 906 residues long: Eukaryotic translation initiation factor 3 subunit C (906 aa).

Positions 1–22 (MSRFFANGSDSESESSEEEVQA) are disordered. Acidic residues predominate over residues 11-20 (SESESSEEEV). A phosphoserine mark is found at Ser34, Ser165, Ser176, and Ser185. The interval 158–283 (REAPDQESEA…KRPEDDEDGE (126 aa)) is disordered. Over residues 162–186 (DQESEAEDEEAAQDSDGGDAGDDSD) the composition is skewed to acidic residues. The segment covering 195-209 (EAAPKVAKTVPAKAA) has biased composition (low complexity). Over residues 211–237 (ADDDDSDDSIDWDSDSETETESSDDEN) the composition is skewed to acidic residues. A compositionally biased stretch (basic and acidic residues) spans 242–270 (MRERFLKRTTEKEEKDDDKRKDKRKEQKI). The 177-residue stretch at 641–817 (FHMHINLELL…ETVVMHRSEP (177 aa)) folds into the PCI domain. Disordered regions lie at residues 853–873 (GNMG…NWGG) and 887–906 (QRGR…IDEE). Over residues 894–906 (QQQQQQVQTIDEE) the composition is skewed to low complexity.

This sequence belongs to the eIF-3 subunit C family. As to quaternary structure, component of the eukaryotic translation initiation factor 3 (eIF-3) complex. The eIF-3 complex interacts with pix.

The protein localises to the cytoplasm. Component of the eukaryotic translation initiation factor 3 (eIF-3) complex, which is involved in protein synthesis of a specialized repertoire of mRNAs and, together with other initiation factors, stimulates binding of mRNA and methionyl-tRNAi to the 40S ribosome. The eIF-3 complex specifically targets and initiates translation of a subset of mRNAs involved in cell proliferation. This Drosophila ananassae (Fruit fly) protein is Eukaryotic translation initiation factor 3 subunit C.